Here is a 113-residue protein sequence, read N- to C-terminus: MQQNGDPRRTNRIVRYKPLDSTANQQQAISEDPLPEYMNVLGMIFSMCGLMIRMKWCSWLALVCSCISFANTRTSDDAKQIVSSFMLSVSAVVMSYLQNPSPIIPPWVTLLQS.

Residues 81–97 traverse the membrane as a helical segment; it reads IVSSFMLSVSAVVMSYL.

This sequence belongs to the Asterix family.

The protein localises to the membrane. This chain is Protein Asterix, found in Caenorhabditis elegans.